Here is a 318-residue protein sequence, read N- to C-terminus: HPr kinase/phosphorylase (318 aa).

Catalysis depends on residues H143 and K164. 158–165 is an ATP binding site; that stretch reads GKSGVGKS. S165 serves as a coordination point for Mg(2+). The Proton acceptor; for phosphorylation activity. Proton donor; for dephosphorylation activity role is filled by D182. The interval 206–215 is important for the catalytic mechanism of both phosphorylation and dephosphorylation; sequence MEIRGLGILN. E207 serves as a coordination point for Mg(2+). R248 is a catalytic residue. The interval 269–274 is important for the catalytic mechanism of dephosphorylation; that stretch reads PVKPGR.

It belongs to the HPrK/P family. As to quaternary structure, homohexamer. The cofactor is Mg(2+).

The catalysed reaction is [HPr protein]-L-serine + ATP = [HPr protein]-O-phospho-L-serine + ADP + H(+). It catalyses the reaction [HPr protein]-O-phospho-L-serine + phosphate + H(+) = [HPr protein]-L-serine + diphosphate. Its function is as follows. Catalyzes the ATP- as well as the pyrophosphate-dependent phosphorylation of a specific serine residue in HPr, a phosphocarrier protein of the phosphoenolpyruvate-dependent sugar phosphotransferase system (PTS). HprK/P also catalyzes the pyrophosphate-producing, inorganic phosphate-dependent dephosphorylation (phosphorolysis) of seryl-phosphorylated HPr (P-Ser-HPr). In Leptospira borgpetersenii serovar Hardjo-bovis (strain L550), this protein is HPr kinase/phosphorylase.